The sequence spans 255 residues: Transcription factor CAULIFLOWER (255 aa).

Residues 1 to 61 form the MADS-box domain; sequence MGRGRVELKR…GKLFEYSSES (61 aa). One can recognise a K-box domain in the interval 90 to 180; it reads QTNWSMEYSR…TKQIKERENI (91 aa). The stretch at 90–198 forms a coiled coil; it reads QTNWSMEYSR…EQLNRSVDDV (109 aa).

As to quaternary structure, homodimer capable of binding to CArG-box sequences. In terms of tissue distribution, expressed in young flower primordia.

It localises to the nucleus. Functionally, probable transcription factor that promotes early floral meristem identity in synergy with APETALA1, FRUITFULL and LEAFY. Is required subsequently for the transition of an inflorescence meristem into a floral meristem. Seems to be partially redundant to the function of APETALA1. Positively regulates the APETALA1 and LEAFY expression. The protein is Transcription factor CAULIFLOWER (CAL) of Arabidopsis thaliana (Mouse-ear cress).